The following is a 412-amino-acid chain: Putative potassium channel protein RPA4233 (412 aa).

The next 5 membrane-spanning stretches (helical) occupy residues 35–55 (FIVF…VPAM), 65–85 (ALEL…IWIA), 164–184 (LMAC…AMHI), 202–222 (WWAI…ATGI), and 225–245 (MVAS…VGIV). The Selectivity filter signature appears at 210–215 (TIGYGD). 270 to 388 (LFSHLTAGDI…RKINQIVEGR (119 aa)) contacts a nucleoside 3',5'-cyclic phosphate.

This sequence belongs to the potassium channel family.

The protein localises to the cell membrane. This Rhodopseudomonas palustris (strain ATCC BAA-98 / CGA009) protein is Putative potassium channel protein RPA4233.